The primary structure comprises 293 residues: Microtubule-associated protein RP/EB family member 1B (293 aa).

A Calponin-homology (CH) domain is found at phenylalanine 13–aspartate 115. 2 disordered regions span residues glutamate 124–valine 188 and leucine 262–threonine 293. The segment covering valine 129–valine 141 has biased composition (basic and acidic residues). The segment covering leucine 151–lysine 166 has biased composition (polar residues). The 71-residue stretch at glycine 180–valine 250 folds into the EB1 C-terminal domain. Positions glycine 266–alanine 285 are enriched in acidic residues.

This sequence belongs to the MAPRE family. As to quaternary structure, homodimer and heterodimer with EB1A. In terms of tissue distribution, highly expressed in guard cells of leaf stomata, pollen grains and pollen tubes. Expressed in young roots.

The protein localises to the cytoplasm. Its subcellular location is the cytoskeleton. It is found in the spindle pole. The protein resides in the phragmoplast. In terms of biological role, binds to the plus end of microtubules and regulates the dynamics of the microtubule cytoskeleton. May be involved in anchoring microtubules to their nucleation sites and/or functioning as a reservoir for distribution to the growing end. In plants, microtubule minus ends are not necessarily severed from the nucleation site and transported to the plus end of a microtubule as part of the recycling process. May play a role in endomembrane organization during polarized growth of plant cells. The polypeptide is Microtubule-associated protein RP/EB family member 1B (EB1B) (Arabidopsis thaliana (Mouse-ear cress)).